A 187-amino-acid chain; its full sequence is Elongation factor P (187 aa).

The protein belongs to the elongation factor P family.

It localises to the cytoplasm. It participates in protein biosynthesis; polypeptide chain elongation. Involved in peptide bond synthesis. Stimulates efficient translation and peptide-bond synthesis on native or reconstituted 70S ribosomes in vitro. Probably functions indirectly by altering the affinity of the ribosome for aminoacyl-tRNA, thus increasing their reactivity as acceptors for peptidyl transferase. This is Elongation factor P from Rhodococcus erythropolis (strain PR4 / NBRC 100887).